Reading from the N-terminus, the 109-residue chain is Con-Ins K2 (109 aa).

Residues 1–24 (MTTSSYFLLVALGLLLYVCQSSFG) form the signal peptide. The propeptide occupies 25–29 (NPHTR). Disulfide bonds link Cys-41–Cys-90, Cys-53–Cys-103, and Cys-89–Cys-94. The residue at position 44 (Glu-44) is a 4-carboxyglutamate. Residues 57–83 (RKRRGFPSMLKARAKRNEAFLLQRDGR) constitute a propeptide, c peptide.

Belongs to the insulin family. In terms of assembly, heterodimer of A and B chains; disulfide-linked. In terms of tissue distribution, expressed by the venom gland.

The protein resides in the secreted. In terms of biological role, this venom insulin, from a fish-hunting cone snail, facilitates prey capture by rapidly inducing hypoglycemic shock. It is one of the smallest known insulin found in nature and lacks the C-terminal segment of the B chain that, in human insulin, mediates engagement of the insulin receptor (INSR) and assembly of the hormone's hexameric storage form. Despite lacking this segment, it both binds and activates human insulin receptor (long isoform (HIR-B)) with a moderate potency (EC(50)=373.2 nM). In vivo, intraperitoneal injection of this peptide into zebrafish lowers blood glucose with a lower potency than human insulin. In addition, when applied to water, this peptide reduces overall locomotor activity of zebrafish larvae, observed as a significant decrease in the percentage of time spent swimming and movement frequency. When tested on a mouse model of diabetes, this insulin also lowers blood glucose with a 20-fold lower potency than human insulin. The polypeptide is Con-Ins K2 (Conus kinoshitai (Kinoshita's cone)).